The chain runs to 267 residues: MIGTIRIFLVVAAMVALSLSLIPFQYLFLKLKNGWKRRLPNFFHRIVARLFGFRIRTVGKLHEGCPLLLVSNHTSWSDIVVLSAVGQVSFIAKSEVRDWPVFGMFAVLQRTVFVERARRGKTVHQTSEIANRLIAGDAMVLFAEGTTSDGNRVLPFKTALFGAAHAAIREAGVAEVAVQPVAIAYTRVHGMAMGRYFRPLVSWPGDVELMPHLKGILREGAIDVEVRFGEPVFVTAETDRKALARTMENRVRALLQSALLGREIPEA.

A helical transmembrane segment spans residues 7–27 (IFLVVAAMVALSLSLIPFQYL).

It belongs to the 1-acyl-sn-glycerol-3-phosphate acyltransferase family. OlsA subfamily.

The protein localises to the membrane. It catalyses the reaction a lyso-ornithine lipid + a fatty acyl-[ACP] = an N(2)-[(3R)-3-(acyloxy)acyl]-L-ornithine lipid + holo-[ACP]. Its pathway is lipid metabolism. In terms of biological role, catalyzes the second step in the formation of ornithine lipids, which are phosphorus-free membrane lipids. Uses acyl-acyl carrier protein (acyl-AcpP) as an acyl donor and converts lyso-ornithine lipid (LOL) into ornithine lipid (OL). The protein is Lyso-ornithine lipid O-acyltransferase of Brucella abortus (strain 2308).